Consider the following 59-residue polypeptide: UPF0391 membrane protein LPC_1949 (59 aa).

Helical transmembrane passes span 5-25 (ALIF…GIAV) and 30-50 (IAKI…IMGL).

The protein belongs to the UPF0391 family.

The protein resides in the cell membrane. This is UPF0391 membrane protein LPC_1949 from Legionella pneumophila (strain Corby).